We begin with the raw amino-acid sequence, 339 residues long: MADLKPYIAKAASGEPLSLGDAKAAFDIMMSGQATPSQIGGFLMALRVRGETVPEIAGAVASMRSRMIPVIAPDDAMDIVGTGGDQSGSYNVSSCTAFVVAGAGVPVAKHGNRALSSRSGAADALAALGINIEADADTIGRSISEAGLGFMFAPMHHSAMRHVSPSRVELGTRTIFNLLGPLSNPASVKRQLVGVFAPQWLEPLAHVLKELGSETAWVVYGDGLDEMTTAGTTQVAALENGQIRTFEITPEEVGLRRCSPAELKGGEAAENAKALLGVLEGKDSAYRDIVLLNSGAALVVAGKAENLKDGIAQAVQSIDSGAALAVLQKVIAVSNDKPA.

5-phospho-alpha-D-ribose 1-diphosphate contacts are provided by residues glycine 81, 84–85, serine 89, 91–94, 109–117, and alanine 121; these read GD, NVSS, and KHGNRALSS. Residue glycine 81 coordinates anthranilate. Serine 93 is a binding site for Mg(2+). Asparagine 112 lines the anthranilate pocket. Anthranilate is bound at residue arginine 167. Residues aspartate 225 and glutamate 226 each contribute to the Mg(2+) site.

Belongs to the anthranilate phosphoribosyltransferase family. Homodimer. Requires Mg(2+) as cofactor.

The catalysed reaction is N-(5-phospho-beta-D-ribosyl)anthranilate + diphosphate = 5-phospho-alpha-D-ribose 1-diphosphate + anthranilate. Its pathway is amino-acid biosynthesis; L-tryptophan biosynthesis; L-tryptophan from chorismate: step 2/5. Its function is as follows. Catalyzes the transfer of the phosphoribosyl group of 5-phosphorylribose-1-pyrophosphate (PRPP) to anthranilate to yield N-(5'-phosphoribosyl)-anthranilate (PRA). The polypeptide is Anthranilate phosphoribosyltransferase (Brucella suis biovar 1 (strain 1330)).